The following is a 27-amino-acid chain: Potassium channel toxin alpha-KTx 9.11 (27 aa).

Cystine bridges form between C3–C19, C6–C23, and C10–C25.

It belongs to the short scorpion toxin superfamily. Potassium channel inhibitor family. Alpha-KTx 09 subfamily. In terms of tissue distribution, expressed by the venom gland.

It is found in the secreted. May play a role in blocking voltage-gated potassium channels Kv1.2/KCNA2, Kv1.3/KCNA3 and Kv1.6/KCNA6 to a lesser extent. In Mesobuthus gibbosus (Mediterranean checkered scorpion), this protein is Potassium channel toxin alpha-KTx 9.11.